The sequence spans 464 residues: Methionine aminopeptidase 2 (464 aa).

The disordered stretch occupies residues 1–86 (MGSKTPGNHR…RKKKKKNTKE (86 aa)). A compositionally biased stretch (acidic residues) spans 43 to 54 (GESEGGEDEDDD). Residues 72 to 83 (KRNKRRKKKKKN) show a composition bias toward basic residues. Residue His-216 participates in substrate binding. Positions 237, 248, and 317 each coordinate a divalent metal cation. His-325 provides a ligand contact to substrate. Residues Glu-350 and Glu-445 each contribute to the a divalent metal cation site.

This sequence belongs to the peptidase M24A family. Methionine aminopeptidase eukaryotic type 2 subfamily. It depends on Co(2+) as a cofactor. Zn(2+) serves as cofactor. Requires Mn(2+) as cofactor. The cofactor is Fe(2+).

Its subcellular location is the cytoplasm. The enzyme catalyses Release of N-terminal amino acids, preferentially methionine, from peptides and arylamides.. In terms of biological role, cotranslationally removes the N-terminal methionine from nascent proteins. The N-terminal methionine is often cleaved when the second residue in the primary sequence is small and uncharged (Met-Ala-, Cys, Gly, Pro, Ser, Thr, or Val). This chain is Methionine aminopeptidase 2, found in Ajellomyces capsulatus (strain NAm1 / WU24) (Darling's disease fungus).